Consider the following 989-residue polypeptide: Cellulose synthase A catalytic subunit 4 [UDP-forming] (989 aa).

Over 1–184 the chain is Cytoplasmic; sequence MMESGVPPCA…SRIIPISKNK (184 aa). 8 residues coordinate Zn(2+): C9, C12, C20, C23, C28, C31, C43, and C46. The segment at 9 to 47 adopts an RING-type; degenerate zinc-finger fold; the sequence is CAACGDDAHAACRACSYALCKACLDEDAAEGRTTCARCG. Residues 138-149 show a composition bias toward basic residues; sequence KKEKKASAKKAA. Residues 138-158 are disordered; it reads KKEKKASAKKAAAKAQAPPVE. Residues 185-205 form a helical membrane-spanning segment; it reads LTPYRAVIIMRLVVLGLFFHY. The Extracellular segment spans residues 206-213; that stretch reads RITNPVYS. Residues 214–234 form a helical membrane-spanning segment; it reads AFGLWMTSVICEIWFGFSWIL. Residues 235-772 are Cytoplasmic-facing; it reads DQFPKWCPIN…INTIVYPFTS (538 aa). 4 residues coordinate UDP-alpha-D-glucose: S272, K278, E279, and D308. D308 is a catalytic residue. Residues 362-389 are a coiled coil; that stretch reads VKERRAMKRDYEEYKVRINALVAKAQKT. K449 lines the UDP-alpha-D-glucose pocket. Mn(2+)-binding residues include K450 and D474. D688 is a catalytic residue. Residues 773-793 traverse the membrane as a helical segment; the sequence is LPLIAYCCLPAICLLTGKFII. Residues 794 to 798 are Extracellular-facing; the sequence is PTLSN. A helical membrane pass occupies residues 799 to 819; the sequence is AATIWFLGLFISIIVTSVLEL. The Cytoplasmic segment spans residues 820 to 835; it reads RWSGIGIEDWWRNEQF. A helical transmembrane segment spans residues 836-856; sequence WVIGGVSAHLFAVFQGILKMI. Over 857–884 the chain is Extracellular; that stretch reads AGLDTNFTVTAKATDDTEFGELYVFKWT. N-linked (GlcNAc...) asparagine glycosylation is present at N862. The helical transmembrane segment at 885 to 905 threads the bilayer; it reads TVLIPPTSILVLNLVGVVAGF. Residues 906 to 916 lie on the Cytoplasmic side of the membrane; it reads SDALNSGYESW. A helical transmembrane segment spans residues 917–937; sequence GPLFGKVFFAMWVIMHLYPFL. At 938–946 the chain is on the extracellular side; sequence KGLMGRQNR. Residues 947 to 967 traverse the membrane as a helical segment; that stretch reads TPTIVVLWSVLLASVFSLLWV. Over 968 to 989 the chain is Cytoplasmic; it reads KIDPFIGSSETTTTNSCANFDC.

The protein belongs to the glycosyltransferase 2 family. Plant cellulose synthase subfamily. Mn(2+) is required as a cofactor. The cofactor is Zn(2+).

The protein resides in the cell membrane. It catalyses the reaction [(1-&gt;4)-beta-D-glucosyl](n) + UDP-alpha-D-glucose = [(1-&gt;4)-beta-D-glucosyl](n+1) + UDP + H(+). It functions in the pathway glycan metabolism; plant cellulose biosynthesis. Functionally, catalytic subunit of cellulose synthase terminal complexes ('rosettes'), required for beta-1,4-glucan microfibril crystallization, a major mechanism of the cell wall formation. Involved in the secondary cell wall formation. This is Cellulose synthase A catalytic subunit 4 [UDP-forming] (CESA4) from Oryza sativa subsp. indica (Rice).